A 194-amino-acid chain; its full sequence is MTGPFDDDGPEEDAPVPAPPDHLAGLRGIDLVRRTLEEARGAARSQGKDVGRGRSGPARRVGGNRRRRTWSGPGPDARDPQLLGAVTQDLAKSRGWSARVAEGSVIGRWRAVVGDQIADHATPTALNEGVLTVTAESTASATQLRMVQSQLLAKIAAVVGDGVVTTLKIVGPAGPSWRKGRYHVSGRGPRDTYG.

The segment covering 1–14 (MTGPFDDDGPEEDA) has biased composition (acidic residues). Positions 1-81 (MTGPFDDDGP…GPGPDARDPQ (81 aa)) are disordered. Positions 30 to 52 (DLVRRTLEEARGAARSQGKDVGR) are enriched in basic and acidic residues.

This sequence belongs to the UPF0232 family.

This chain is UPF0232 protein in recF-gyrB intergenic region, found in Mycolicibacterium smegmatis (Mycobacterium smegmatis).